Reading from the N-terminus, the 520-residue chain is Glucose starvation modulator protein 1 (520 aa).

Residues 20–48 (CVFCHEKHLQCSNERPCKNCVKRGLAHEC) constitute a DNA-binding region (zn(2)-C6 fungal-type). Residues 376–445 (DYEKLSQLNS…FRLFKTVAVG (70 aa)) form the PAS domain.

It belongs to the ERT1/acuK family.

The protein resides in the nucleus. In terms of biological role, transcription factor which regulates nonfermentable carbon utilization. This Scheffersomyces stipitis (strain ATCC 58785 / CBS 6054 / NBRC 10063 / NRRL Y-11545) (Yeast) protein is Glucose starvation modulator protein 1 (GSM1).